The following is a 196-amino-acid chain: Protease (196 aa).

Residues His-54, Asp-70, and Cys-121 contribute to the active site.

It belongs to the peptidase C5 family. Interacts with protease cofactor pVI-C; this interaction is necessary for protease activation.

The protein localises to the virion. Its subcellular location is the host nucleus. The catalysed reaction is Cleaves proteins of the adenovirus and its host cell at two consensus sites: -Yaa-Xaa-Gly-Gly-|-Xaa- and -Yaa-Xaa-Gly-Xaa-|-Gly- (in which Yaa is Met, Ile or Leu, and Xaa is any amino acid).. Its activity is regulated as follows. Requires DNA and protease cofactor for maximal activation. Inside nascent virions, becomes partially activated by binding to the viral DNA, allowing it to cleave the cofactor that binds to the protease and fully activates it. Actin, like the viral protease cofactor, seems to act as a cofactor in the cleavage of cytokeratin 18 and of actin itself. Cleaves viral precursor proteins (pTP, pIIIa, pVI, pVII, pVIII, and pX) inside newly assembled particles giving rise to mature virions. Protease complexed to its cofactor slides along the viral DNA to specifically locate and cleave the viral precursors. Mature virions have a weakened organization compared to the unmature virions, thereby facilitating subsequent uncoating. Without maturation, the particle lacks infectivity and is unable to uncoat. Late in adenovirus infection, in the cytoplasm, may participate in the cytoskeleton destruction. Cleaves host cell cytoskeletal keratins K7 and K18. The polypeptide is Protease (Bos taurus (Bovine)).